Reading from the N-terminus, the 294-residue chain is uncharacterized protein (294 aa).

2 disordered regions span residues 1–148 (MFLR…LEKP) and 268–294 (DEAA…GKGL). S34 and S35 each carry phosphoserine. The segment covering 35–44 (SSENSGSDWD) has biased composition (low complexity). Positions 52–62 (DVGHPKTKDSG) are enriched in basic and acidic residues. Residues S71 and S90 each carry the phosphoserine modification. Basic and acidic residues-rich tracts occupy residues 73–92 (PSKE…DSLK) and 278–294 (GLER…GKGL).

This is an uncharacterized protein from Homo sapiens (Human).